A 365-amino-acid polypeptide reads, in one-letter code: MESENQIAILDYIFNQVNQPNQPKIVWFSGEGEDEKINFLIRLNDFFKPKFVENTNDSSFLLSFRNHVETKNSTPLTQANFANIANKLLAVLFGSLQWKQLNKPTGNWFLVILFLALLWLRQCWLKLQLTKISKFVNQKGILSFIKQQWPILTTLVTVGTTLGTPVFSLTIAQQDGIKQNAGNDVFIFLIIFSVFSISLGLVSSLIFLVSSLFSIRQKKTLDALDKVLSKFIDKYFFLDEKEIKKQLKYQFKNNGVCFFYGFDFDQAEFLEQSMNLMLLLKQTNCFILVGCKESEMTLIKNKIEPNINLKQNSFYLDLSNEISQVEQISKFNLLFRQLRLSSELFYLEDFFDYLTTAKQIVNFLF.

3 helical membrane passes run 105 to 125 (TGNW…QCWL), 151 to 171 (ILTT…SLTI), and 187 to 207 (IFLI…SLIF).

Its subcellular location is the cell membrane. This is an uncharacterized protein from Mycoplasma genitalium (strain ATCC 33530 / DSM 19775 / NCTC 10195 / G37) (Mycoplasmoides genitalium).